A 242-amino-acid chain; its full sequence is Glucosamine-6-phosphate deaminase (242 aa).

D67 acts as the Proton acceptor; for enolization step in catalysis. Catalysis depends on N137, which acts as the For ring-opening step. H139 acts as the Proton acceptor; for ring-opening step in catalysis. E144 acts as the For ring-opening step in catalysis.

This sequence belongs to the glucosamine/galactosamine-6-phosphate isomerase family. NagB subfamily.

It catalyses the reaction alpha-D-glucosamine 6-phosphate + H2O = beta-D-fructose 6-phosphate + NH4(+). The protein operates within amino-sugar metabolism; N-acetylneuraminate degradation; D-fructose 6-phosphate from N-acetylneuraminate: step 5/5. Catalyzes the reversible isomerization-deamination of glucosamine 6-phosphate (GlcN6P) to form fructose 6-phosphate (Fru6P) and ammonium ion. The protein is Glucosamine-6-phosphate deaminase of Staphylococcus haemolyticus (strain JCSC1435).